Here is a 539-residue protein sequence, read N- to C-terminus: Membrane protein insertase YidC (539 aa).

The chain crosses the membrane as a helical span at residues 6 to 26 (VILAVALSFAVLLGWQFLFPP). The tract at residues 28–63 (PQQPAPAQQEQTAQPNQAVDSSVAGPVSNQLPDPAS) is disordered. Low complexity predominate over residues 32 to 45 (APAQQEQTAQPNQA). Polar residues predominate over residues 54–63 (VSNQLPDPAS). 3 helical membrane passes run 349–369 (YGIA…PLSH), 421–441 (MLLQ…TVAL), and 496–516 (IMMF…SGLV).

It belongs to the OXA1/ALB3/YidC family. Type 1 subfamily. As to quaternary structure, interacts with the Sec translocase complex via SecD. Specifically interacts with transmembrane segments of nascent integral membrane proteins during membrane integration.

The protein localises to the cell inner membrane. Functionally, required for the insertion and/or proper folding and/or complex formation of integral membrane proteins into the membrane. Involved in integration of membrane proteins that insert both dependently and independently of the Sec translocase complex, as well as at least some lipoproteins. Aids folding of multispanning membrane proteins. The chain is Membrane protein insertase YidC from Maridesulfovibrio salexigens (strain ATCC 14822 / DSM 2638 / NCIMB 8403 / VKM B-1763) (Desulfovibrio salexigens).